We begin with the raw amino-acid sequence, 211 residues long: Uracil phosphoribosyltransferase (211 aa).

5-phospho-alpha-D-ribose 1-diphosphate is bound by residues arginine 78, arginine 103, and 130 to 138 (DPMLATGGT). Residues isoleucine 195 and 200–202 (GDA) contribute to the uracil site. Aspartate 201 provides a ligand contact to 5-phospho-alpha-D-ribose 1-diphosphate.

This sequence belongs to the UPRTase family. Mg(2+) serves as cofactor.

The enzyme catalyses UMP + diphosphate = 5-phospho-alpha-D-ribose 1-diphosphate + uracil. The protein operates within pyrimidine metabolism; UMP biosynthesis via salvage pathway; UMP from uracil: step 1/1. With respect to regulation, allosterically activated by GTP. Functionally, catalyzes the conversion of uracil and 5-phospho-alpha-D-ribose 1-diphosphate (PRPP) to UMP and diphosphate. The polypeptide is Uracil phosphoribosyltransferase (Streptomyces coelicolor (strain ATCC BAA-471 / A3(2) / M145)).